A 145-amino-acid chain; its full sequence is Transcription antitermination protein NusB (145 aa).

Belongs to the NusB family.

Involved in transcription antitermination. Required for transcription of ribosomal RNA (rRNA) genes. Binds specifically to the boxA antiterminator sequence of the ribosomal RNA (rrn) operons. The protein is Transcription antitermination protein NusB of Burkholderia cenocepacia (strain HI2424).